We begin with the raw amino-acid sequence, 102 residues long: Pole-localizer protein TmaR (102 aa).

The stretch at 7–34 (IINQARRKNKLKRELQDNQKKIRDNQKR) forms a coiled coil.

Belongs to the pole-localizer TmaR family.

Its subcellular location is the cytoplasm. In terms of biological role, pole-localizer protein involved in the regulation of several cellular processes. In Aliivibrio fischeri (strain ATCC 700601 / ES114) (Vibrio fischeri), this protein is Pole-localizer protein TmaR.